The sequence spans 152 residues: D-aminoacyl-tRNA deacylase (152 aa).

The Gly-cisPro motif, important for rejection of L-amino acids signature appears at 138–139 (GP).

It belongs to the DTD family. As to quaternary structure, homodimer.

Its subcellular location is the cytoplasm. The catalysed reaction is glycyl-tRNA(Ala) + H2O = tRNA(Ala) + glycine + H(+). The enzyme catalyses a D-aminoacyl-tRNA + H2O = a tRNA + a D-alpha-amino acid + H(+). In terms of biological role, an aminoacyl-tRNA editing enzyme that deacylates mischarged D-aminoacyl-tRNAs. Also deacylates mischarged glycyl-tRNA(Ala), protecting cells against glycine mischarging by AlaRS. Acts via tRNA-based rather than protein-based catalysis; rejects L-amino acids rather than detecting D-amino acids in the active site. By recycling D-aminoacyl-tRNA to D-amino acids and free tRNA molecules, this enzyme counteracts the toxicity associated with the formation of D-aminoacyl-tRNA entities in vivo and helps enforce protein L-homochirality. This Chloroherpeton thalassium (strain ATCC 35110 / GB-78) protein is D-aminoacyl-tRNA deacylase.